We begin with the raw amino-acid sequence, 166 residues long: Regulator of ribonuclease activity A (166 aa).

It belongs to the RraA family. In terms of assembly, homotrimer. Binds to both RNA-binding sites in the C-terminal region of Rne and to RhlB.

It localises to the cytoplasm. In terms of biological role, globally modulates RNA abundance by binding to RNase E (Rne) and regulating its endonucleolytic activity. Can modulate Rne action in a substrate-dependent manner by altering the composition of the degradosome. Modulates RNA-binding and helicase activities of the degradosome. This Histophilus somni (strain 2336) (Haemophilus somnus) protein is Regulator of ribonuclease activity A.